We begin with the raw amino-acid sequence, 312 residues long: Olfactory receptor 2L8 (312 aa).

The Extracellular segment spans residues 1–24; it reads MENYNQTSTDFILLGLFPPSRIDL. The N-linked (GlcNAc...) asparagine glycan is linked to Asn5. A helical membrane pass occupies residues 25 to 48; sequence FFFILIVFIFLMALIGNLSMILLI. Residues 49–56 lie on the Cytoplasmic side of the membrane; sequence FLDTHLHT. The helical transmembrane segment at 57-78 threads the bilayer; it reads PMYFLLSQLSLIDLNYISTIVP. At 79 to 99 the chain is on the extracellular side; sequence KMASDFLHGNKSISFTGCGIQ. A glycan (N-linked (GlcNAc...) asparagine) is linked at Asn88. A disulfide bond links Cys96 and Cys188. The chain crosses the membrane as a helical span at residues 100-119; sequence SFFFLALGGAEALLLASMAY. Over 120–138 the chain is Cytoplasmic; sequence DRYIAICFPLHYLIRMSKR. The chain crosses the membrane as a helical span at residues 139 to 157; it reads VCVLMITGSWIIGSINACA. Residues 158–194 lie on the Extracellular side of the membrane; the sequence is HTVYVLHIPYCRSRAINHFFCDVPAMVTLACMDTWVY. The chain crosses the membrane as a helical span at residues 195-218; the sequence is EGTVFLSATIFLVFPFIGISCSYG. The Cytoplasmic portion of the chain corresponds to 219-235; it reads QVLFAVYHMKSAEGRKK. Residues 236–258 traverse the membrane as a helical segment; sequence AYLTCSTHLTVVTFYYAPFVYTY. Topologically, residues 259–271 are extracellular; it reads LRPRSLRSPTEDK. Residues 272-291 traverse the membrane as a helical segment; that stretch reads VLAVFYTILTPMLNPIIYSL. Residues 292–312 lie on the Cytoplasmic side of the membrane; it reads RNKEVMGALTRVSQRICSVKM.

This sequence belongs to the G-protein coupled receptor 1 family.

It localises to the cell membrane. Functionally, odorant receptor. The chain is Olfactory receptor 2L8 (OR2L8) from Homo sapiens (Human).